The following is a 300-amino-acid chain: Hydroxyacyl-thioester dehydratase type 2, mitochondrial (300 aa).

It belongs to the HTD2 family.

Its subcellular location is the mitochondrion. Functionally, mitochondrial 3-hydroxyacyl-thioester dehydratase involved in fatty acid biosynthesis. Required for respiratory growth and for normal mitochondrial morphology. In Schizosaccharomyces pombe (strain 972 / ATCC 24843) (Fission yeast), this protein is Hydroxyacyl-thioester dehydratase type 2, mitochondrial (htd2).